The following is a 252-amino-acid chain: 2-succinyl-6-hydroxy-2,4-cyclohexadiene-1-carboxylate synthase (252 aa).

It belongs to the AB hydrolase superfamily. MenH family. As to quaternary structure, monomer.

The enzyme catalyses 5-enolpyruvoyl-6-hydroxy-2-succinyl-cyclohex-3-ene-1-carboxylate = (1R,6R)-6-hydroxy-2-succinyl-cyclohexa-2,4-diene-1-carboxylate + pyruvate. Its pathway is quinol/quinone metabolism; 1,4-dihydroxy-2-naphthoate biosynthesis; 1,4-dihydroxy-2-naphthoate from chorismate: step 3/7. It participates in quinol/quinone metabolism; menaquinone biosynthesis. In terms of biological role, catalyzes a proton abstraction reaction that results in 2,5-elimination of pyruvate from 2-succinyl-5-enolpyruvyl-6-hydroxy-3-cyclohexene-1-carboxylate (SEPHCHC) and the formation of 2-succinyl-6-hydroxy-2,4-cyclohexadiene-1-carboxylate (SHCHC). In Salmonella heidelberg (strain SL476), this protein is 2-succinyl-6-hydroxy-2,4-cyclohexadiene-1-carboxylate synthase.